The primary structure comprises 103 residues: Integration host factor subunit beta (103 aa).

This sequence belongs to the bacterial histone-like protein family. As to quaternary structure, heterodimer of an alpha and a beta chain.

This protein is one of the two subunits of integration host factor, a specific DNA-binding protein that functions in genetic recombination as well as in transcriptional and translational control. The polypeptide is Integration host factor subunit beta (Sinorhizobium medicae (strain WSM419) (Ensifer medicae)).